Reading from the N-terminus, the 357-residue chain is Homoserine O-succinyltransferase (357 aa).

C146 acts as the Acyl-thioester intermediate in catalysis. The substrate site is built by K167 and S196. The active-site Proton acceptor is the H239. E241 is an active-site residue. R253 is a binding site for substrate.

This sequence belongs to the MetA family.

It is found in the cytoplasm. It carries out the reaction L-homoserine + succinyl-CoA = O-succinyl-L-homoserine + CoA. It participates in amino-acid biosynthesis; L-methionine biosynthesis via de novo pathway; O-succinyl-L-homoserine from L-homoserine: step 1/1. Transfers a succinyl group from succinyl-CoA to L-homoserine, forming succinyl-L-homoserine. This is Homoserine O-succinyltransferase from Allochromatium vinosum (strain ATCC 17899 / DSM 180 / NBRC 103801 / NCIMB 10441 / D) (Chromatium vinosum).